The following is an 884-amino-acid chain: MATGRSTSTESSEKTCQQRDPLPEYRALCGTDGDAAEILTDVLTNTDSDGVVFCLAHNCYSYNIGGGEALLTLCLPAKRPWGAEKCLPVIQFRCDASRAQEFLFQGRPIPVRYIQTNLNHRAVKKFFKPILSVLTCSDKKGGGGEGAHADLKSTIFWFRAKFVAAVRKTFKITASPFWMISTFGCTEAQFVLVSSCYFFERHECTIDTLSHLSRLFDGSRGRQLTTVNTFSDLAGMFGTSAWLGRVPEFSAYVGKKLARDDLESAAVDEAVNAFRGQLMLSNADLIHYIYLSFFQCLNKEKFLEYSLRTNPHNIDGVPPEEPIITGFIDEGFKSKMATYYTKSSYLKNHVRVGSLYLDGVEGYSPEAIEAGPPAAAGGGGGADRYWAGQSRDVQGLLSDILADHPASRLSPDLHGLLDLAALGDSSGVAGGVKDSLFPEPLRCPVYRCQYLNKTFFAVVTRDNLARAWERAVQLPTQVTGWEGMEDARLTACVHYAELAFSLGHLREQLSVSRHEYFNPRLPVFNLVLDFDLPLKKPGLSLERVYSICRSVRSDVLSVLGVLGEVDEAAHPVYFFKSACPRPEWDEPYAGRPFCTCDAKLGLRIITPLPRGVAIVGGAPLVALAKILNRMIKMNREDLLEICPGLPDADGPLDTGIYHRGRCVRLPHTYKVNEACGLERLLRLFVCHPGSPDKAAYIRDAMTLRNLLHHSKSAYWEGNAREGVSEEAPQKTKVVYSVTDVSENFLVCQTQQQLPRSYERPDSRIETMTGRDLVTWVTEVAWPKVFHNIKAYIPDDKTTQFHFVKFIHTSHNIIQVKPQRGNNFVCISSNHRNKTQSVRIFIVLYTNKKDEVTITLMSQCFAHKCNSNKPRAHFSIPLQLRGRDF.

The segment at 825–864 (CISSNHRNKTQSVRIFIVLYTNKKDEVTITLMSQCFAHKC) adopts a CHC2-type zinc-finger fold.

It belongs to the herpesviridae DNA primase family. As to quaternary structure, associates with the helicase and the primase-associated factor to form the helicase-primase factor.

Its subcellular location is the host nucleus. In terms of biological role, essential component of the helicase/primase complex. Unwinds the DNA at the replication forks and generates single-stranded DNA for both leading and lagging strand synthesis. The primase initiates primer synthesis and thereby produces large amount of short RNA primers on the lagging strand that the polymerase elongates using dNTPs. The protein is DNA primase (56) of Equine herpesvirus 2 (strain 86/87) (EHV-2).